Consider the following 250-residue polypeptide: 4-hydroxy-tetrahydrodipicolinate reductase (250 aa).

NAD(+)-binding positions include Gly10–Ile15, Gly78–Thr80, and Ala105–Phe108. The active-site Proton donor/acceptor is the His135. Residue His136 coordinates (S)-2,3,4,5-tetrahydrodipicolinate. Residue Lys139 is the Proton donor of the active site. Gly145–Thr146 serves as a coordination point for (S)-2,3,4,5-tetrahydrodipicolinate.

It belongs to the DapB family.

Its subcellular location is the cytoplasm. The enzyme catalyses (S)-2,3,4,5-tetrahydrodipicolinate + NAD(+) + H2O = (2S,4S)-4-hydroxy-2,3,4,5-tetrahydrodipicolinate + NADH + H(+). It carries out the reaction (S)-2,3,4,5-tetrahydrodipicolinate + NADP(+) + H2O = (2S,4S)-4-hydroxy-2,3,4,5-tetrahydrodipicolinate + NADPH + H(+). Its pathway is amino-acid biosynthesis; L-lysine biosynthesis via DAP pathway; (S)-tetrahydrodipicolinate from L-aspartate: step 4/4. Its function is as follows. Catalyzes the conversion of 4-hydroxy-tetrahydrodipicolinate (HTPA) to tetrahydrodipicolinate. In Streptomyces coelicolor (strain ATCC BAA-471 / A3(2) / M145), this protein is 4-hydroxy-tetrahydrodipicolinate reductase.